The sequence spans 259 residues: Ribonuclease T2-B (259 aa).

Residues 1–29 form the signal peptide; it reads MAPAEARGALPGWISVLGWGLALCSLCGA. An intrachain disulfide couples Cys53 to Cys59. The active site involves His69. Cystine bridges form between Cys79-Cys125, Cys188-Cys244, and Cys206-Cys217. Asn80 and Asn110 each carry an N-linked (GlcNAc...) asparagine glycan. Catalysis depends on residues Glu118 and His122. N-linked (GlcNAc...) asparagine glycosylation occurs at Asn216.

Belongs to the RNase T2 family.

It localises to the secreted. The protein resides in the lysosome lumen. The protein localises to the endoplasmic reticulum lumen. Its subcellular location is the mitochondrion intermembrane space. It carries out the reaction a ribonucleotidyl-ribonucleotide-RNA + H2O = a 3'-end 3'-phospho-ribonucleotide-RNA + a 5'-end dephospho-ribonucleoside-RNA + H(+). The enzyme catalyses an adenylyl-uridine-RNA = a 3'-end 2',3'-cyclophospho-AMP-RNA + a 5'-end dephospho-uridine-RNA. It catalyses the reaction a guanylyl-uridine-RNA = a 3'-end 2',3'-cyclophospho-GMP-RNA + a 5'-end dephospho-uridine-RNA. With respect to regulation, inhibited by Zn(2+) and Cu(2+). In terms of biological role, ribonuclease that plays an essential role in innate immune response by recognizing and degrading RNAs from microbial pathogens that are subsequently sensed by TLR8. Cleaves preferentially single-stranded RNA molecules between purine and uridine residues, which critically contributes to the supply of catabolic uridine and the generation of purine-2',3'-cyclophosphate-terminated oligoribonucleotides. In turn, RNase T2 degradation products promote the RNA-dependent activation of TLR8. In plasmacytoid dendritic cells, it cooperates with PLD3 or PLD4 5'-&gt;3' exonucleases to process RNA fragments and release 2',3'-cyclic guanosine monophosphate (2',3'-cGMP), a potent stimulatory ligand for TLR7. Also plays a key role in degradation of mitochondrial RNA and processing of non-coding RNA imported from the cytosol into mitochondria. Participates as well in degradation of mitochondrion-associated cytosolic rRNAs. This Mus musculus (Mouse) protein is Ribonuclease T2-B.